Consider the following 203-residue polypeptide: DNA-binding transcriptional repressor ScoC (203 aa).

Residues 13–157 (ALVFTQKMAQ…MMCMIRHIYG (145 aa)) form the HTH marR-type domain. The H-T-H motif DNA-binding region spans 63-86 (ISEIAKFGVMHVSTAFNFSKKLEE). Residues 183–203 (KKKAKDSAADEPAEELEPVNS) form a disordered region. Residues 191–203 (ADEPAEELEPVNS) show a composition bias toward acidic residues.

In terms of assembly, homodimer. Interacts with SinR.

Negative regulator of protease production and sporulation. Acts by binding directly to the promoter of protease genes (aprE and nprE), and by repressing oligopeptide permease operons (appABCDF and oppABCDF), thereby preventing uptake of oligopeptides required for initiation of sporulation. Acts with SinR as a corepressor of epr expression. Binds to non-m6A-5-methylated 5'-GACGAG-3' sites, tested with scpA; when the target is methylated by DnmA, this repressor no longer binds and transcription is up-regulated. This is DNA-binding transcriptional repressor ScoC from Bacillus subtilis (strain 168).